The sequence spans 795 residues: MAVPGSLAECGYIRTVLGQQILGHLDSSSLALPSEARLRLAGSSGRGDPAARSQRIQEQVQQTLARRGRSSAVSGNLHRTSSVPEYVYKLHVVENDFVGRQSPVTRDYDMLKAGMTATYGSRWGRAAAQYSSQKSVEERSWRQPLRRLEISPDSSPERAHYGHSEYQYAWRSHVVPGGRLTLPRYARSEILGLRQAGTARRPPGCGSFSDAVFDNGPLKPTMPTHPPGTSHSAGSLLEETTVRVSQARLQSTQSRTARSSWPRSSVRSSLREPGRMLTTAGQAAVGSGDAHGDRSVFADAQLGNADIEMTLERAVNMLDADHVPVSKISAAATFIQHESFQKSEARKRVNQLRGIPKLLQLLKLQNEDVQRAACGALRNLVFEDNDNKLEVAELNGVPRLLQVLKQTRDLETKKQITGLLWNLSSSDKLKHLMITEALLTLTESVIIPFSGWPEGDYPKANGLLDFDIFYNVTGCLRNMSSAGPDGRKMMRRCDGLIDSLVHYVRGTIADYQPDDKATENCVCILHNLSYQLEAELPEKYSQSIYMQNRNIQTNSNKSIGCFGSRSRKLKEQYQDLQMPEERSNPHGIEWLWHSIVIRMYLSLIAKSTRNYTQEASLGALQNLTAGGGPIPTLVARMVVQKENGLQHTRKMLHVGDPSVKKTAVSLLRNLSRNLSLQNEIAKETLPDLVSIIPDTVPSTDLLIETTASACYTLNNLMQNSYQNARDLLNTGGLQKIMTISIGEGYAPNKASKAASVLLYSLWAHTELHHAYKKAQFKKTDFVNSRTAKAYHSLKD.

The required for binding to single-stranded DNA stretch occupies residues 1 to 318 (MAVPGSLAEC…MTLERAVNML (318 aa)). Phosphoserine is present on serine 44. Arginine 46 is modified (omega-N-methylarginine). 9 positions are modified to phosphoserine: serine 82, serine 132, serine 135, serine 151, serine 154, serine 155, serine 172, serine 188, and serine 232. 2 disordered regions span residues 197 to 233 (GTARRPPGCGSFSDAVFDNGPLKPTMPTHPPGTSHSA) and 245 to 274 (SQARLQSTQSRTARSSWPRSSVRSSLREPG). Positions 245 to 257 (SQARLQSTQSRTA) are enriched in polar residues. The segment covering 258-268 (RSSWPRSSVRS) has biased composition (low complexity). Phosphoserine occurs at positions 265 and 287. ARM repeat units lie at residues 299-339 (DAQL…QHES), 343-382 (SEARKRVNQLRGIPKLLQLLKLQNEDVQRAACGALRNLVF), 385-425 (NDNK…NLSS), 484-530 (PDGR…NLSY), 585-625 (PHGI…NLTA), 633-672 (LVARMVVQKENGLQHTRKMLHVGDPSVKKTAVSLLRNLSR), 677-718 (QNEI…NLMQ), and 721-763 (YQNA…SLWA).

Belongs to the beta-catenin family. Interacts with DSC2. Interacts with JUP. Interacts with KRT5/CK5, KRT8/CK8, KRT14/CK14, KRT18/CK18 and VIM. Interacts (via N-terminus) with MARK3/C-TAK1. Interacts with DSP. Interacts with DSG1, DSG2 and DSG3. Interacts (via N-terminus) with CTNNB1. Interacts with CDH1. Interacts with the RNA polymerase III (Pol III) complex proteins POLR3A/RPC155, POLR3F/RPC39 and POLR3C/RPC82. Interacts with CTNNA3. Interacts (via N-terminus) with SCN5A/Nav1.5. Interacts with ANK3/ANKG and GJA1/CX43. In terms of tissue distribution, expressed in cardiomyocytes in the heart (at protein level).

The protein resides in the nucleus. Its subcellular location is the cell junction. It is found in the desmosome. The protein localises to the cytoplasm. In terms of biological role, a component of desmosome cell-cell junctions which are required for positive regulation of cellular adhesion. Regulates focal adhesion turnover resulting in changes in focal adhesion size, cell adhesion and cell spreading, potentially via transcriptional modulation of beta-integrins. Required to maintain gingival epithelial barrier function. Important component of the desmosome that is also required for localization of desmosome component proteins such as DSC2, DSG2 and JUP to the desmosome cell-cell junction. Required for the formation of desmosome cell junctions in cardiomyocytes, thereby required for the correct formation of the heart, specifically trabeculation and formation of the atria walls. Loss of desmosome cell junctions leads to mis-localization of DSP and DSG2 resulting in disruption of cell-cell adhesion and disordered intermediate filaments. Modulates profibrotic gene expression in cardiomyocytes via regulation of DSP expression and subsequent activation of downstream TGFB1 and MAPK14/p38 MAPK signaling. Required for cardiac sodium current propagation and electrical synchrony in cardiac myocytes, via ANK3 stabilization and modulation of SCN5A/Nav1.5 localization to cell-cell junctions. Required for mitochondrial function, nuclear envelope integrity and positive regulation of SIRT3 transcription via maintaining DES localization at its nuclear envelope and cell tip anchoring points, and thereby preserving regulation of the transcriptional program. Maintenance of nuclear envelope integrity protects against DNA damage and transcriptional dysregulation of genes, especially those involved in the electron transport chain, thereby preserving mitochondrial function and protecting against superoxide radical anion generation. Binds single-stranded DNA (ssDNA). May regulate the localization of GJA1 to gap junctions in intercalated disks of the heart. In Mus musculus (Mouse), this protein is Plakophilin-2.